Reading from the N-terminus, the 405-residue chain is Obg-like ATPase homolog (405 aa).

In terms of domain architecture, OBG-type G spans 17 to 283 (PTSGIVGLAN…CKGIASEYFD (267 aa)). Residues 26-31 (NVGKST) and Val-231 each bind ATP. The region spanning 312-398 (NLISFFTCGP…QDNDIALFKA (87 aa)) is the TGS domain.

The protein belongs to the TRAFAC class OBG-HflX-like GTPase superfamily. OBG GTPase family.

Its subcellular location is the mitochondrion. In terms of biological role, hydrolyzes ATP, and can also hydrolyze GTP with lower efficiency. Has lower affinity for GTP. The sequence is that of Obg-like ATPase homolog (YLF2) from Saccharomyces cerevisiae (strain ATCC 204508 / S288c) (Baker's yeast).